The primary structure comprises 686 residues: Mitochondrial Rho GTPase 1 (686 aa).

Topologically, residues 1 to 648 are cytoplasmic; it reads MPRRDLVRIV…PAQRIRVVAR (648 aa). In terms of domain architecture, Miro 1 spans 4-172; sequence RDLVRIVLVG…FYFAQKAVLH (169 aa). Residues 13–20, 59–63, and 117–120 each bind GTP; these read GDDGVGKS, DTSSN, and NKID. EF-hand domains lie at 188–223 and 341–376; these read KCLE…CFST and LGNQ…SPGN. 8 residues coordinate Ca(2+): aspartate 201, aspartate 203, aspartate 205, glutamate 212, aspartate 354, aspartate 356, aspartate 358, and glutamate 365. The region spanning 455–624 is the Miro 2 domain; sequence RNVFLCYVLG…WVAITRVALD (170 aa). GTP is bound by residues 464–471, 506–510, and 574–577; these read GATGSGKT, EMEGV, and TKSD. A helical; Anchor for type IV membrane protein membrane pass occupies residues 649–665; sequence WGLAATTISAIVAVWMK. Over 666–686 the chain is Mitochondrial intermembrane; that stretch reads WQGYSFKGIWGWMAKFAGLRT.

This sequence belongs to the mitochondrial Rho GTPase family.

The protein localises to the mitochondrion outer membrane. Mitochondrial GTPase involved in mitochondrial trafficking. Probably involved in control of anterograde transport of mitochondria and their subcellular distribution. The protein is Mitochondrial Rho GTPase 1 (GEM1) of Cryptococcus neoformans var. neoformans serotype D (strain B-3501A) (Filobasidiella neoformans).